A 380-amino-acid chain; its full sequence is Cytochrome b (380 aa).

4 helical membrane passes run 34–54 (YGSL…FLAM), 78–99 (WLMR…YLHI), 114–134 (WNIG…GYVL), and 179–199 (FFTF…LHLL). Residues His-84 and His-98 each contribute to the heme b site. Residues His-183 and His-197 each coordinate heme b. Residue His-202 coordinates a ubiquinone. A run of 4 helical transmembrane segments spans residues 227–247 (YKDT…STTN), 289–309 (LGGV…PSLH), 321–341 (LSQL…WIGG), and 348–368 (FILI…VLLP).

Belongs to the cytochrome b family. As to quaternary structure, the cytochrome bc1 complex contains 3 respiratory subunits (MT-CYB, CYC1 and UQCRFS1), 2 core proteins (UQCRC1 and UQCRC2) and probably 6 low-molecular weight proteins. The cofactor is heme b.

Its subcellular location is the mitochondrion inner membrane. Its function is as follows. Component of the ubiquinol-cytochrome c reductase complex (complex III or cytochrome b-c1 complex) that is part of the mitochondrial respiratory chain. The b-c1 complex mediates electron transfer from ubiquinol to cytochrome c. Contributes to the generation of a proton gradient across the mitochondrial membrane that is then used for ATP synthesis. The protein is Cytochrome b (mt-cyb) of Typhlonectes natans (Rubber eel).